A 357-amino-acid polypeptide reads, in one-letter code: Glutamine synthetase cytosolic isozyme 1-2 (357 aa).

Positions 19–99 constitute a GS beta-grasp domain; it reads IIAEYIWVGG…VMCDCYTPQG (81 aa). A GS catalytic domain is found at 106 to 357; sequence KRHSAAKIFS…AETTLLWKQN (252 aa).

The protein belongs to the glutamine synthetase family. Homooctamer. Expressed in roots and at lower levels in leaf blades and spikelets (rice flower).

The protein resides in the cytoplasm. It catalyses the reaction L-glutamate + NH4(+) + ATP = L-glutamine + ADP + phosphate + H(+). In terms of biological role, high-affinity glutamine synthetase involved in ammonium assimilation. Plays an important role in the primary assimilation of ammonium taken up by roots. Plays a role in maintaining nitrogen metabolic balance during ammonium assimilation, thus controlling plant growth and development. Reassimilates ammonium generated during lignification within developing tillers, which is probably required for the outgrowth of axillary buds. Required for nitrogen-dependent biosynthesis of cytokinin. Active cytokinin in axillary bud meristem is required for axillary bud outgrowth and necessary for tillering. The sequence is that of Glutamine synthetase cytosolic isozyme 1-2 from Oryza sativa subsp. japonica (Rice).